A 466-amino-acid chain; its full sequence is Methylenetetrahydrofolate--tRNA-(uracil-5-)-methyltransferase TrmFO (466 aa).

14 to 19 is a binding site for FAD; sequence GGGLAG.

This sequence belongs to the MnmG family. TrmFO subfamily. The cofactor is FAD.

It localises to the cytoplasm. It catalyses the reaction uridine(54) in tRNA + (6R)-5,10-methylene-5,6,7,8-tetrahydrofolate + NADH + H(+) = 5-methyluridine(54) in tRNA + (6S)-5,6,7,8-tetrahydrofolate + NAD(+). The enzyme catalyses uridine(54) in tRNA + (6R)-5,10-methylene-5,6,7,8-tetrahydrofolate + NADPH + H(+) = 5-methyluridine(54) in tRNA + (6S)-5,6,7,8-tetrahydrofolate + NADP(+). Its function is as follows. Catalyzes the folate-dependent formation of 5-methyl-uridine at position 54 (M-5-U54) in all tRNAs. In Brucella suis (strain ATCC 23445 / NCTC 10510), this protein is Methylenetetrahydrofolate--tRNA-(uracil-5-)-methyltransferase TrmFO.